Reading from the N-terminus, the 279-residue chain is Bifunctional protein FolD (279 aa).

NADP(+) is bound by residues 166–168 and S191; that span reads GRS.

Belongs to the tetrahydrofolate dehydrogenase/cyclohydrolase family. Homodimer.

It carries out the reaction (6R)-5,10-methylene-5,6,7,8-tetrahydrofolate + NADP(+) = (6R)-5,10-methenyltetrahydrofolate + NADPH. The enzyme catalyses (6R)-5,10-methenyltetrahydrofolate + H2O = (6R)-10-formyltetrahydrofolate + H(+). It participates in one-carbon metabolism; tetrahydrofolate interconversion. Catalyzes the oxidation of 5,10-methylenetetrahydrofolate to 5,10-methenyltetrahydrofolate and then the hydrolysis of 5,10-methenyltetrahydrofolate to 10-formyltetrahydrofolate. The chain is Bifunctional protein FolD from Shouchella clausii (strain KSM-K16) (Alkalihalobacillus clausii).